We begin with the raw amino-acid sequence, 539 residues long: Hydroxylamine reductase (539 aa).

C3, C6, C13, and C19 together coordinate [4Fe-4S] cluster. Residues H240, E264, C308, C395, C423, C448, E482, and K484 each coordinate hybrid [4Fe-2O-2S] cluster. C395 is modified (cysteine persulfide).

The protein belongs to the HCP family. The cofactor is [4Fe-4S] cluster. Hybrid [4Fe-2O-2S] cluster is required as a cofactor.

The protein localises to the cytoplasm. It carries out the reaction A + NH4(+) + H2O = hydroxylamine + AH2 + H(+). Catalyzes the reduction of hydroxylamine to form NH(3) and H(2)O. The polypeptide is Hydroxylamine reductase (Thermodesulfovibrio yellowstonii (strain ATCC 51303 / DSM 11347 / YP87)).